The primary structure comprises 202 residues: Matrix protein (202 aa).

The disordered stretch occupies residues 1 to 33 (MNILRKIVKNRKDEDTQKPSPASAPPDDDDLWL). The short motif at 35 to 38 (PPEY) is the PPXY motif element. Residues 115 to 151 (KLRRTLIFQWADSRGPLEGEELEHSQEITWDDDTEFV) are essential for glycoprotein binding.

It belongs to the lyssavirus matrix protein family. Homomultimer. Interacts with nucleoprotein and with the cytoplasmic domain of glycoprotein. Interacts with host ATP6V1A; this interaction plays an important role in virion uncoating after viral entry.

The protein localises to the virion membrane. It is found in the host endomembrane system. It localises to the host cytoplasm. Its function is as follows. Plays a major role in assembly, budding and uncoating of virion after membrane fusion. Completely covers the ribonucleoprotein coil and keep it in condensed bullet-shaped form. Inhibits viral transcription and stimulates replication. Plays a major role in early induction of TRAIL-mediated apoptosis in infected neurons. Inhibits the integrated stress response (ISR) in the infected cell by blocking the formation of stress granules. In Homo sapiens (Human), this protein is Matrix protein (M).